A 747-amino-acid polypeptide reads, in one-letter code: Elongation factor G, mitochondrial (747 aa).

The transit peptide at 1–32 (MTLITRVLNSNLPLRLSALKTVRQLQCGYSSH) directs the protein to the mitochondrion. The tr-type G domain occupies 42 to 319 (ERIRNIGISA…AIIDYLPNPG (278 aa)). Residues 51–58 (AHIDSGKT), 118–122 (DTPGH), and 172–175 (NKLD) each bind GTP.

It belongs to the TRAFAC class translation factor GTPase superfamily. Classic translation factor GTPase family. EF-G/EF-2 subfamily.

The protein localises to the mitochondrion. Its pathway is protein biosynthesis; polypeptide chain elongation. Its function is as follows. Mitochondrial GTPase that catalyzes the GTP-dependent ribosomal translocation step during translation elongation. During this step, the ribosome changes from the pre-translocational (PRE) to the post-translocational (POST) state as the newly formed A-site-bound peptidyl-tRNA and P-site-bound deacylated tRNA move to the P and E sites, respectively. Catalyzes the coordinated movement of the two tRNA molecules, the mRNA and conformational changes in the ribosome. Essential during development as it acts as a retrograde signal from mitochondria to the nucleus to slow down cell proliferation if mitochondrial energy output is low. The chain is Elongation factor G, mitochondrial from Drosophila virilis (Fruit fly).